The primary structure comprises 209 residues: Uracil phosphoribosyltransferase (209 aa).

5-phospho-alpha-D-ribose 1-diphosphate contacts are provided by residues arginine 79, arginine 104, and 131–139 (DPMLATGGS). Uracil is bound by residues isoleucine 194 and 199-201 (GDA). Aspartate 200 is a binding site for 5-phospho-alpha-D-ribose 1-diphosphate.

The protein belongs to the UPRTase family. It depends on Mg(2+) as a cofactor.

It catalyses the reaction UMP + diphosphate = 5-phospho-alpha-D-ribose 1-diphosphate + uracil. It functions in the pathway pyrimidine metabolism; UMP biosynthesis via salvage pathway; UMP from uracil: step 1/1. Its activity is regulated as follows. Allosterically activated by GTP. In terms of biological role, catalyzes the conversion of uracil and 5-phospho-alpha-D-ribose 1-diphosphate (PRPP) to UMP and diphosphate. The chain is Uracil phosphoribosyltransferase from Streptococcus thermophilus (strain CNRZ 1066).